Reading from the N-terminus, the 509-residue chain is ATP synthase subunit alpha (509 aa).

169–176 (GDRQTGKT) serves as a coordination point for ATP.

This sequence belongs to the ATPase alpha/beta chains family. In terms of assembly, F-type ATPases have 2 components, CF(1) - the catalytic core - and CF(0) - the membrane proton channel. CF(1) has five subunits: alpha(3), beta(3), gamma(1), delta(1), epsilon(1). CF(0) has three main subunits: a(1), b(2) and c(9-12). The alpha and beta chains form an alternating ring which encloses part of the gamma chain. CF(1) is attached to CF(0) by a central stalk formed by the gamma and epsilon chains, while a peripheral stalk is formed by the delta and b chains.

It is found in the cell inner membrane. It catalyses the reaction ATP + H2O + 4 H(+)(in) = ADP + phosphate + 5 H(+)(out). Produces ATP from ADP in the presence of a proton gradient across the membrane. The alpha chain is a regulatory subunit. The protein is ATP synthase subunit alpha of Methylorubrum populi (strain ATCC BAA-705 / NCIMB 13946 / BJ001) (Methylobacterium populi).